Consider the following 163-residue polypeptide: ATP synthase subunit delta, mitochondrial (163 aa).

The N-terminal 18 residues, 1–18 (MLARTIQRFSVVAKRGYA), are a transit peptide targeting the mitochondrion.

This sequence belongs to the ATPase epsilon chain family. In terms of assembly, subunit of the F-type ATPase which has 2 components, CF(1) - the catalytic core - and CF(0) - the membrane proton channel.

Its subcellular location is the mitochondrion. The protein localises to the mitochondrion inner membrane. Its function is as follows. Mitochondrial membrane ATP synthase (F(1)F(0) ATP synthase or Complex V) produces ATP from ADP in the presence of a proton gradient across the membrane which is generated by electron transport complexes of the respiratory chain. F-type ATPases consist of two structural domains, F(1) - containing the extramembraneous catalytic core, and F(0) - containing the membrane proton channel, linked together by a central stalk and a peripheral stalk. During catalysis, ATP turnover in the catalytic domain of F(1) is coupled via a rotary mechanism of the central stalk subunits to proton translocation. Part of the complex F(1) domain and of the central stalk which is part of the complex rotary element. The sequence is that of ATP synthase subunit delta, mitochondrial from Caenorhabditis elegans.